Reading from the N-terminus, the 781-residue chain is Lon protease (781 aa).

The Lon N-terminal domain maps to 16–214 (ANVLVTRGIV…KILSFTIDER (199 aa)). ATP is bound at residue 365-372 (GPPGVGKT). The Lon proteolytic domain occupies 601 to 781 (EYMPGVVNGM…YDDVYNRLFK (181 aa)). Active-site residues include Ser688 and Lys731.

This sequence belongs to the peptidase S16 family. Homohexamer. Organized in a ring with a central cavity.

The protein resides in the cytoplasm. It carries out the reaction Hydrolysis of proteins in presence of ATP.. Functionally, ATP-dependent serine protease that mediates the selective degradation of mutant and abnormal proteins as well as certain short-lived regulatory proteins. Required for cellular homeostasis and for survival from DNA damage and developmental changes induced by stress. Degrades polypeptides processively to yield small peptide fragments that are 5 to 10 amino acids long. Binds to DNA in a double-stranded, site-specific manner. This is Lon protease from Malacoplasma penetrans (strain HF-2) (Mycoplasma penetrans).